Reading from the N-terminus, the 197-residue chain is Probable UbiX-like flavin prenyltransferase (197 aa).

FMN-binding positions include 9-11 (GAT), serine 36, 87-90 (SMKT), and arginine 122.

This sequence belongs to the UbiX/PAD1 family. YclB subfamily. In terms of assembly, homododecamer.

It catalyses the reaction dimethylallyl phosphate + FMNH2 = prenylated FMNH2 + phosphate. Functionally, flavin prenyltransferase that catalyzes the synthesis of the prenylated FMN cofactor (prenyl-FMN) for phenolic acid decarboxylase C. Involved in the decarboxylation and detoxification of phenolic derivatives under both aerobic and anaerobic conditions. The protein is Probable UbiX-like flavin prenyltransferase (ecdB) of Escherichia coli.